The following is a 209-amino-acid chain: Large ribosomal subunit protein uL4 (209 aa).

Positions 50–89 (MTKTKGLVSGGGKKPFKQKGTGGARQGSSRSILMPGGGTA) are disordered.

Belongs to the universal ribosomal protein uL4 family. As to quaternary structure, part of the 50S ribosomal subunit.

Its function is as follows. One of the primary rRNA binding proteins, this protein initially binds near the 5'-end of the 23S rRNA. It is important during the early stages of 50S assembly. It makes multiple contacts with different domains of the 23S rRNA in the assembled 50S subunit and ribosome. In terms of biological role, forms part of the polypeptide exit tunnel. The protein is Large ribosomal subunit protein uL4 of Bdellovibrio bacteriovorus (strain ATCC 15356 / DSM 50701 / NCIMB 9529 / HD100).